Consider the following 347-residue polypeptide: Ubiquinone biosynthesis protein coq-4, mitochondrial (347 aa).

The transit peptide at 1-49 (MEVTALRRSAALVARASSQNAIRPAVCAAISSTSPTPPTQIQTQQTRQF) directs the protein to the mitochondrion. The Zn(2+) site is built by His185, Asp186, His189, and Glu201. Residues 284–310 (IRKREREEKRRRKEMERMLSGRGTEDV) are disordered.

It belongs to the COQ4 family. As to quaternary structure, component of a multi-subunit COQ enzyme complex, composed of at least coq-3, coq-4, coq-5, coq-6, coq-7 and coq-9. It depends on Zn(2+) as a cofactor.

It localises to the mitochondrion inner membrane. It catalyses the reaction a 4-hydroxy-3-methoxy-5-(all-trans-polyprenyl)benzoate + H(+) = a 2-methoxy-6-(all-trans-polyprenyl)phenol + CO2. Its pathway is cofactor biosynthesis; ubiquinone biosynthesis. Functionally, lyase that catalyzes the C1-decarboxylation of 4-hydroxy-3-methoxy-5-(all-trans-polyprenyl)benzoic acid into 2-methoxy-6-(all-trans-polyprenyl)phenol during ubiquinone biosynthesis. The protein is Ubiquinone biosynthesis protein coq-4, mitochondrial of Neurospora crassa (strain ATCC 24698 / 74-OR23-1A / CBS 708.71 / DSM 1257 / FGSC 987).